A 637-amino-acid chain; its full sequence is ATP-dependent zinc metalloprotease FtsH (637 aa).

The Cytoplasmic portion of the chain corresponds to 1–6 (MNNQGR). A helical transmembrane segment spans residues 7 to 27 (SILAWAALFIFVILLFNVFQS). Over 28–103 (DGLLGVRNNI…VVPLETRMNT (76 aa)) the chain is Periplasmic. Residues 104–124 (FLGFLISWFPMLLLIGVWVFF) form a helical membrane-spanning segment. The Cytoplasmic segment spans residues 125–637 (MRQMHGGGKA…TKAQKENIAS (513 aa)). 195–202 (GPPGTGKT) lines the ATP pocket. Histidine 417 serves as a coordination point for Zn(2+). The active site involves glutamate 418. 2 residues coordinate Zn(2+): histidine 421 and aspartate 495. A disordered region spans residues 617 to 637 (DKEKLHEKTKTTKAQKENIAS).

This sequence in the central section; belongs to the AAA ATPase family. It in the C-terminal section; belongs to the peptidase M41 family. Homohexamer. Zn(2+) serves as cofactor.

The protein localises to the cell inner membrane. Its function is as follows. Acts as a processive, ATP-dependent zinc metallopeptidase for both cytoplasmic and membrane proteins. Plays a role in the quality control of integral membrane proteins. This Rickettsia typhi (strain ATCC VR-144 / Wilmington) protein is ATP-dependent zinc metalloprotease FtsH.